A 262-amino-acid chain; its full sequence is Phosphatidylglycerol--prolipoprotein diacylglyceryl transferase (262 aa).

A run of 4 helical transmembrane segments spans residues leucine 17 to glycine 37, leucine 57 to tyrosine 77, glycine 95 to histidine 115, and leucine 119 to glycine 139. Arginine 140 contacts a 1,2-diacyl-sn-glycero-3-phospho-(1'-sn-glycerol). A run of 3 helical transmembrane segments spans residues proline 173–tyrosine 193, alanine 200–phenylalanine 220, and phenylalanine 227–leucine 247.

The protein belongs to the Lgt family.

The protein resides in the cell inner membrane. The enzyme catalyses L-cysteinyl-[prolipoprotein] + a 1,2-diacyl-sn-glycero-3-phospho-(1'-sn-glycerol) = an S-1,2-diacyl-sn-glyceryl-L-cysteinyl-[prolipoprotein] + sn-glycerol 1-phosphate + H(+). The protein operates within protein modification; lipoprotein biosynthesis (diacylglyceryl transfer). Functionally, catalyzes the transfer of the diacylglyceryl group from phosphatidylglycerol to the sulfhydryl group of the N-terminal cysteine of a prolipoprotein, the first step in the formation of mature lipoproteins. This is Phosphatidylglycerol--prolipoprotein diacylglyceryl transferase from Bordetella parapertussis (strain 12822 / ATCC BAA-587 / NCTC 13253).